Consider the following 191-residue polypeptide: Protein GrpE (191 aa).

Over residues 1 to 15 the composition is skewed to basic and acidic residues; the sequence is MGKEEKNNIEDKALD. The interval 1-35 is disordered; it reads MGKEEKNNIEDKALDNEQEMDQESTSKAVEELSIE.

Belongs to the GrpE family. Homodimer.

Its subcellular location is the cytoplasm. Its function is as follows. Participates actively in the response to hyperosmotic and heat shock by preventing the aggregation of stress-denatured proteins, in association with DnaK and GrpE. It is the nucleotide exchange factor for DnaK and may function as a thermosensor. Unfolded proteins bind initially to DnaJ; upon interaction with the DnaJ-bound protein, DnaK hydrolyzes its bound ATP, resulting in the formation of a stable complex. GrpE releases ADP from DnaK; ATP binding to DnaK triggers the release of the substrate protein, thus completing the reaction cycle. Several rounds of ATP-dependent interactions between DnaJ, DnaK and GrpE are required for fully efficient folding. The chain is Protein GrpE from Francisella philomiragia subsp. philomiragia (strain ATCC 25017 / CCUG 19701 / FSC 153 / O#319-036).